We begin with the raw amino-acid sequence, 208 residues long: Uracil phosphoribosyltransferase (208 aa).

Residues arginine 78, arginine 103, and 130-138 (DPMLATGGS) contribute to the 5-phospho-alpha-D-ribose 1-diphosphate site. Residues isoleucine 193 and 198 to 200 (GDA) contribute to the uracil site. Position 199 (aspartate 199) interacts with 5-phospho-alpha-D-ribose 1-diphosphate.

Belongs to the UPRTase family. Mg(2+) serves as cofactor.

It carries out the reaction UMP + diphosphate = 5-phospho-alpha-D-ribose 1-diphosphate + uracil. It functions in the pathway pyrimidine metabolism; UMP biosynthesis via salvage pathway; UMP from uracil: step 1/1. With respect to regulation, allosterically activated by GTP. In terms of biological role, catalyzes the conversion of uracil and 5-phospho-alpha-D-ribose 1-diphosphate (PRPP) to UMP and diphosphate. This chain is Uracil phosphoribosyltransferase, found in Pasteurella multocida (strain Pm70).